Here is a 342-residue protein sequence, read N- to C-terminus: Ketol-acid reductoisomerase (NADP(+)) (342 aa).

Residues 2–182 form the KARI N-terminal Rossmann domain; it reads AEMFYDDDAD…GGLRAGGIKT (181 aa). NADP(+)-binding positions include 25-28, lysine 48, serine 51, serine 53, and 83-86; these read FGSQ and DHLQ. Histidine 108 is an active-site residue. Position 134 (glycine 134) interacts with NADP(+). The region spanning 183 to 328 is the KARI C-terminal knotted domain; that stretch reads TFTEETETDL…RELRKLMAWV (146 aa). Mg(2+) is bound by residues aspartate 191, glutamate 195, glutamate 227, and glutamate 231. Position 252 (serine 252) interacts with substrate.

It belongs to the ketol-acid reductoisomerase family. The cofactor is Mg(2+).

The catalysed reaction is (2R)-2,3-dihydroxy-3-methylbutanoate + NADP(+) = (2S)-2-acetolactate + NADPH + H(+). It carries out the reaction (2R,3R)-2,3-dihydroxy-3-methylpentanoate + NADP(+) = (S)-2-ethyl-2-hydroxy-3-oxobutanoate + NADPH + H(+). It functions in the pathway amino-acid biosynthesis; L-isoleucine biosynthesis; L-isoleucine from 2-oxobutanoate: step 2/4. It participates in amino-acid biosynthesis; L-valine biosynthesis; L-valine from pyruvate: step 2/4. Its function is as follows. Involved in the biosynthesis of branched-chain amino acids (BCAA). Catalyzes an alkyl-migration followed by a ketol-acid reduction of (S)-2-acetolactate (S2AL) to yield (R)-2,3-dihydroxy-isovalerate. In the isomerase reaction, S2AL is rearranged via a Mg-dependent methyl migration to produce 3-hydroxy-3-methyl-2-ketobutyrate (HMKB). In the reductase reaction, this 2-ketoacid undergoes a metal-dependent reduction by NADPH to yield (R)-2,3-dihydroxy-isovalerate. This Kineococcus radiotolerans (strain ATCC BAA-149 / DSM 14245 / SRS30216) protein is Ketol-acid reductoisomerase (NADP(+)).